Reading from the N-terminus, the 89-residue chain is Small ribosomal subunit protein uS15 (89 aa).

Belongs to the universal ribosomal protein uS15 family. In terms of assembly, part of the 30S ribosomal subunit. Forms a bridge to the 50S subunit in the 70S ribosome, contacting the 23S rRNA.

Functionally, one of the primary rRNA binding proteins, it binds directly to 16S rRNA where it helps nucleate assembly of the platform of the 30S subunit by binding and bridging several RNA helices of the 16S rRNA. In terms of biological role, forms an intersubunit bridge (bridge B4) with the 23S rRNA of the 50S subunit in the ribosome. This Streptococcus equi subsp. zooepidemicus (strain H70) protein is Small ribosomal subunit protein uS15.